Consider the following 78-residue polypeptide: Calcium/calmodulin-dependent protein kinase II inhibitor 1 (78 aa).

The segment at S41 to K68 is CAMK2 inhibitory domain.

It belongs to the CAMK2N family. Interacts with CAMK2B; the presence of Ca(2+)/calmodulin increases the interaction but is not essential. Interacts with CAMK2A; this interaction requires CAMK2A activation by Ca(2+). In terms of tissue distribution, expressed in the brain (at protein level). Expressed in cardiomyocytes but not cardiac fibroblasts (at protein level).

Its subcellular location is the synapse. The protein resides in the cell projection. It is found in the dendrite. It localises to the postsynaptic density. In terms of biological role, potent and specific inhibitor of CaM-kinase II (CAMK2). Plays a role in the maintenance of long-term retrieval-induced memory in response to contextual fear. Modulates blood pressure and vascular reactivity via regulation of CAMK2 activity in addition to regulation of left ventricular mass. Mediates the NLRP3 inflammasome in cardiomyocytes via acting as an inhibitor of the MAPK14/p38 and MAPK8/JNK pathways, thereby regulating ventricular remodeling and cardiac rhythm post-myocardial infarction. Negatively effects insulin sensitivity and promotes lipid formation in adipose tissues independent of CAMK2 signaling. The protein is Calcium/calmodulin-dependent protein kinase II inhibitor 1 (Camk2n1) of Mus musculus (Mouse).